The primary structure comprises 117 residues: Hydrogenase maturation factor HypA (117 aa).

His2 is a binding site for Ni(2+). Residues Cys73, Cys76, Cys89, and Cys92 each contribute to the Zn(2+) site.

This sequence belongs to the HypA/HybF family.

Functionally, involved in the maturation of [NiFe] hydrogenases. Required for nickel insertion into the metal center of the hydrogenase. The polypeptide is Hydrogenase maturation factor HypA (Chlorobium luteolum (strain DSM 273 / BCRC 81028 / 2530) (Pelodictyon luteolum)).